The primary structure comprises 476 residues: Endonuclease SceI small subunit (476 aa).

It belongs to the LAGLIDADG endonuclease family. In terms of assembly, endonuclease SceI (Endo.SceI) is a heterodimer of ENS2 and SSC1. Post-translationally, the N-terminus is blocked.

Its subcellular location is the mitochondrion. Its function is as follows. Catalytic component of endonuclease SceI (Endo.SceI), which cleaves specifically at multiple sites on mitochondrial DNA and produces double-stranded breaks. The chain is Endonuclease SceI small subunit (ENS2) from Saccharomyces cerevisiae (Baker's yeast).